We begin with the raw amino-acid sequence, 31 residues long: Nemertide alpha-6 (31 aa).

3 cysteine pairs are disulfide-bonded: cysteine 2–cysteine 16, cysteine 9–cysteine 20, and cysteine 15–cysteine 26. A 4-hydroxyproline mark is found at proline 28 and proline 29.

Belongs to the nemertide family. Confined to the epidermis and to the mucus layer.

The protein localises to the secreted. Functionally, highly potent toxin against both insect and some mammalian sodium channels (Nav). It potently inhibits inactivation of insect sodium channels of B.germanica (BgNav1) (EC(50)=2.6 nM) and also delays the inactivation of mammalian Nav with potent activity on Nav1.1/SCN1A (hNav1.1/SCN1A; EC(50)=7.9 nM, rNav1.2/SCN2A; EC(50)=24.3 nM, rNav1.3/SCN3A; EC(50)=105.6 nM, rNav1.4/SCN4A; EC(50)=46.4 nM, hNav1.5/SCN5A; EC(50)=215.2 nM, mNav1.6/SCN8A; EC(50)=36.3 nM, hNav1.9/SCN9A; EC(50)=97.2 nM). 1 uM is enough to completely inhibits the inactivation, resulting in sustained non-inactivating currents. In addition, the toxin significantly enhances the recovery from inactivation, and the open state is not required for the toxin to interact with the channel. In vivo, injection into brine shrimp (Artemia salina) stops movement or causes death after 24 hours (EC(50)=2.8 uM). This is Nemertide alpha-6 from Lineus sanguineus (Ribbon worm).